Reading from the N-terminus, the 314-residue chain is Cytochrome b558/566 subunit B (314 aa).

The next 8 helical transmembrane spans lie at 47-67 (LLLV…LIVS), 76-96 (SLIP…IPNY), 102-122 (LYSL…EGLI), 127-147 (LSIL…ASIL), 155-175 (LFIS…AYVI), 186-206 (YIAI…ENII), 233-253 (HITL…TSLI), and 264-284 (FLII…IYML).

It is found in the cell membrane. This is Cytochrome b558/566 subunit B (cbsB) from Saccharolobus solfataricus (strain ATCC 35092 / DSM 1617 / JCM 11322 / P2) (Sulfolobus solfataricus).